The sequence spans 241 residues: Tetraspanin-1 (241 aa).

Topologically, residues 1–11 (MQCFSFIKTMM) are cytoplasmic. Residues 12–34 (ILFNLLIFLCGAALLAVGIWVSI) traverse the membrane as a helical segment. Residues 35-53 (DGASFLKIFGPLSSSAMQF) are Extracellular-facing. A helical membrane pass occupies residues 54-76 (VNVGYFLIAAGVVVFALGFLGCY). Topologically, residues 77–88 (GAKTESKCALMT) are cytoplasmic. A helical transmembrane segment spans residues 89-111 (FFFILLLIFIAEVAAAVVALVYT). Topologically, residues 112–214 (TMAEHFLTLL…LYDIRTNAVT (103 aa)) are extracellular. N-linked (GlcNAc...) asparagine glycosylation is found at N141, N154, N178, and N184. The helical transmembrane segment at 215-237 (VGGVAAGIGGLELAAMIVSMYLY) threads the bilayer. The Cytoplasmic portion of the chain corresponds to 238 to 241 (CNLQ).

Belongs to the tetraspanin (TM4SF) family. As to quaternary structure, interacts with SLC19A2. Interacts with NTRK1/TRKA.

The protein localises to the lysosome membrane. Structural component of specialized membrane microdomains known as tetraspanin-enriched microdomains (TERMs), which act as platforms for receptor clustering and signaling. Participates thereby in diverse biological functions such as cell signal transduction, adhesion, migration and protein trafficking. Regulates neuronal differentiation in response to NGF by facilitating NGF-mediated activation of NTRK1/TRKA receptor tyrosine kinase and subsequent downstream signaling pathways. Plays a role in the inhibition of TNFalpha-induced apoptosis. Mechanistically, inhibits the NF-kappa-B signaling pathway by blocking phosphorylation of CHUK. Also promotes the stability of the thiamine transporter 1/SLC19A2 in intestinal epithelial cells leading to an increase of thiamine uptake process. In Pongo abelii (Sumatran orangutan), this protein is Tetraspanin-1 (TSPAN1).